A 1083-amino-acid chain; its full sequence is Solute carrier family 12 member 7 (1083 aa).

Residues 1–51 form a disordered region; the sequence is MPTNFTVVPVEARADGAGDEAAERTEEPGSPESADPACPTPGDGNPRENSP. At 1–119 the chain is on the cytoplasmic side; the sequence is MPTNFTVVPV…RREIKAPRMG (119 aa). Over residues 12-27 the composition is skewed to basic and acidic residues; that stretch reads ARADGAGDEAAERTEE. Residues Ser-30, Ser-33, Ser-50, and Ser-62 each carry the phosphoserine modification. Residues 120–142 form a discontinuously helical membrane-spanning segment; the sequence is TFIGVYLPCLQNILGVILFLRLT. K(+) contacts are provided by Asn-131 and Ile-132. Residue Val-135 participates in chloride binding. At 143–149 the chain is on the extracellular side; the sequence is WIVGAAG. Residues 150-172 form a helical membrane-spanning segment; sequence VLESFLIVAMCCTCTMLTAISMS. Residues 173–196 lie on the Cytoplasmic side of the membrane; sequence AIATNGVVPAGGSYYMISRSLGPE. A helical membrane pass occupies residues 197–225; that stretch reads FGGAVGLCFYLGTTFAGAMYILGTIEIFL. At 226–249 the chain is on the extracellular side; that stretch reads TYISPSAAIFQAETADGEAAALLN. 2 helical membrane-spanning segments follow: residues 250–271 and 272–300; these read NMRV…VGVK and YVNK…KTAF. The Extracellular portion of the chain corresponds to 301 to 419; sequence APPDIPVCLL…PYVLTDIMTY (119 aa). 3 N-linked (GlcNAc...) asparagine glycosylation sites follow: Asn-312, Asn-331, and Asn-360. The helical transmembrane segment at 420 to 440 threads the bilayer; it reads FTMLVGIYFPSVTGIMAGSNR. The K(+) site is built by Pro-429 and Thr-432. Residue Pro-429 participates in chloride binding. Chloride contacts are provided by Gly-433 and Ile-434. At 441 to 450 the chain is on the cytoplasmic side; it reads SGDLKDAQKS. Residues 451-473 traverse the membrane as a helical segment; it reads IPTGTILAIVTTSFIYLSCIVLF. Residues 474–504 are Extracellular-facing; sequence GACIEGVVLRDKFGEALQGNLVIGMLAWPSP. The chain crosses the membrane as a helical span at residues 505 to 531; the sequence is WVIVIGSFFSTCGAGLQSLTGAPRLLQ. At 532–554 the chain is on the cytoplasmic side; it reads AIARDGIIPFLQVFGHGKANGEP. 2 helical membrane-spanning segments follow: residues 555–573 and 574–598; these read TWAL…LIAS and LDSV…ACAV. Tyr-589 contacts chloride. Over 599 to 612 the chain is Cytoplasmic; the sequence is QTLLRTPNWRPRFK. A run of 2 helical transmembrane segments spans residues 613–635 and 636–651; these read FYHW…ICSW and YYAL…IYKY. At 652 to 1083 the chain is on the cytoplasmic side; the sequence is IEYRGAEKEW…GGREVITIYS (432 aa). The interval 664-680 is scissor helix; the sequence is GIRGLSLNAARYALLRV. 2 positions are modified to phosphothreonine: Thr-973 and Thr-980.

The protein belongs to the SLC12A transporter family. K/Cl co-transporter subfamily. As to quaternary structure, homodimer; adopts a domain-swap conformation at the scissor helices connecting the transmembrane domain and C-terminal domain. Heterodimer with K-Cl cotransporter SLC12A5. In terms of tissue distribution, widely expressed with highest levels in kidney, liver and pancreas. Expressed in choroid plexus and suprachiasmatic nucleus.

The protein resides in the cell membrane. It catalyses the reaction K(+)(in) + chloride(in) = K(+)(out) + chloride(out). Activated by N-ethylmaleimide (NEM). Inhibited by furosemide, DIDS and bumetanide. The inhibition is much stronger in the presence of 50 mM K(+) in the uptake medium. Inhibited by DIOA. Inhibited by WNK3. Mediates electroneutral potassium-chloride cotransport when activated by cell swelling. May mediate K(+) uptake into Deiters' cells in the cochlea and contribute to K(+) recycling in the inner ear. Important for the survival of cochlear outer and inner hair cells and the maintenance of the organ of Corti. May be required for basolateral Cl(-) extrusion in the kidney and contribute to renal acidification. This is Solute carrier family 12 member 7 from Rattus norvegicus (Rat).